We begin with the raw amino-acid sequence, 192 residues long: Putative acetyltransferase YjbC (192 aa).

The N-acetyltransferase domain maps to M1–T139.

The protein localises to the cytoplasm. The chain is Putative acetyltransferase YjbC (yjbC) from Bacillus subtilis (strain 168).